The following is a 243-amino-acid chain: Venom nerve growth factor 1 (243 aa).

The signal sequence occupies residues 1–18; that stretch reads MSMLCYTLIIAFLIGIWA. The propeptide occupies 19 to 125; that stretch reads APKSEDNVPL…TLNRNIRAKR (107 aa). Over residues 47–66 the composition is skewed to basic and acidic residues; it reads GLKTSRNTDQRHPAPKKAED. A disordered region spans residues 47–69; the sequence is GLKTSRNTDQRHPAPKKAEDQEL. Disulfide bonds link cysteine 139/cysteine 204, cysteine 182/cysteine 232, and cysteine 192/cysteine 234. A glycan (N-linked (GlcNAc...) asparagine) is linked at asparagine 148.

The protein belongs to the NGF-beta family. As to quaternary structure, homodimer; non-covalently linked. Expressed by the venom gland.

The protein resides in the secreted. Its function is as follows. Nerve growth factor is important for the development and maintenance of the sympathetic and sensory nervous systems. It stimulates division and differentiation of sympathetic and embryonic sensory neurons as well as basal forebrain cholinergic neurons in the brain. Its relevance in the snake venom is not clear. However, it has been shown to inhibit metalloproteinase-dependent proteolysis of platelet glycoprotein Ib alpha, suggesting a metalloproteinase inhibition to prevent metalloprotease autodigestion and/or protection against prey proteases. Binds a lipid between the two protein chains in the homodimer. The lipid-bound form promotes histamine relase from mouse mast cells, contrary to the lipid-free form. The polypeptide is Venom nerve growth factor 1 (Pseudonaja textilis (Eastern brown snake)).